A 398-amino-acid polypeptide reads, in one-letter code: Dual-specificity RNA methyltransferase RlmN (398 aa).

The Proton acceptor role is filled by Glu119. The 240-residue stretch at 125–364 (EGDRATLCVS…TIVRKTRGDD (240 aa)) folds into the Radical SAM core domain. A disulfide bridge connects residues Cys132 and Cys369. Positions 139, 143, and 146 each coordinate [4Fe-4S] cluster. S-adenosyl-L-methionine-binding positions include 193 to 194 (GE), Ser225, 247 to 249 (SLH), and Asn326. The active-site S-methylcysteine intermediate is the Cys369.

Belongs to the radical SAM superfamily. RlmN family. [4Fe-4S] cluster is required as a cofactor.

It is found in the cytoplasm. It catalyses the reaction adenosine(2503) in 23S rRNA + 2 reduced [2Fe-2S]-[ferredoxin] + 2 S-adenosyl-L-methionine = 2-methyladenosine(2503) in 23S rRNA + 5'-deoxyadenosine + L-methionine + 2 oxidized [2Fe-2S]-[ferredoxin] + S-adenosyl-L-homocysteine. It carries out the reaction adenosine(37) in tRNA + 2 reduced [2Fe-2S]-[ferredoxin] + 2 S-adenosyl-L-methionine = 2-methyladenosine(37) in tRNA + 5'-deoxyadenosine + L-methionine + 2 oxidized [2Fe-2S]-[ferredoxin] + S-adenosyl-L-homocysteine. Its function is as follows. Specifically methylates position 2 of adenine 2503 in 23S rRNA and position 2 of adenine 37 in tRNAs. m2A2503 modification seems to play a crucial role in the proofreading step occurring at the peptidyl transferase center and thus would serve to optimize ribosomal fidelity. This Yersinia enterocolitica serotype O:8 / biotype 1B (strain NCTC 13174 / 8081) protein is Dual-specificity RNA methyltransferase RlmN.